We begin with the raw amino-acid sequence, 24 residues long: Chaperonin GroEL (24 aa).

The protein belongs to the chaperonin (HSP60) family. In terms of assembly, forms a cylinder of 14 subunits composed of two heptameric rings stacked back-to-back. Interacts with the co-chaperonin GroES.

Its subcellular location is the cytoplasm. It catalyses the reaction ATP + H2O + a folded polypeptide = ADP + phosphate + an unfolded polypeptide.. Its function is as follows. Together with its co-chaperonin GroES, plays an essential role in assisting protein folding. The GroEL-GroES system forms a nano-cage that allows encapsulation of the non-native substrate proteins and provides a physical environment optimized to promote and accelerate protein folding. The sequence is that of Chaperonin GroEL from Acinetobacter calcoaceticus.